The following is a 405-amino-acid chain: Maintenance of mitochondrial morphology protein 1 (405 aa).

The Lumenal portion of the chain corresponds to methionine 1–glycine 86. Residues leucine 87–phenylalanine 107 traverse the membrane as a helical segment. At alanine 108–histidine 405 the chain is on the cytoplasmic side. Positions alanine 166–proline 385 constitute an SMP-LTD domain. Residues serine 303 to asparagine 324 form a disordered region.

This sequence belongs to the MMM1 family. As to quaternary structure, homodimer. Component of the ER-mitochondria encounter structure (ERMES) or MDM complex, composed of MMM1, MDM10, MDM12 and MDM34. An MMM1 homodimer associates with one molecule of MDM12 on each side in a pairwise head-to-tail manner, and the SMP-LTD domains of MMM1 and MDM12 generate a continuous hydrophobic tunnel for phospholipid trafficking.

The protein localises to the endoplasmic reticulum membrane. In terms of biological role, component of the ERMES/MDM complex, which serves as a molecular tether to connect the endoplasmic reticulum (ER) and mitochondria. Components of this complex are involved in the control of mitochondrial shape and protein biogenesis, and function in nonvesicular lipid trafficking between the ER and mitochondria. The MDM12-MMM1 subcomplex functions in the major beta-barrel assembly pathway that is responsible for biogenesis of all outer membrane beta-barrel proteins, and acts in a late step after the SAM complex. The MDM10-MDM12-MMM1 subcomplex further acts in the TOM40-specific pathway after the action of the MDM12-MMM1 complex. Essential for establishing and maintaining the structure of mitochondria and maintenance of mtDNA nucleoids. The polypeptide is Maintenance of mitochondrial morphology protein 1 (Meyerozyma guilliermondii (strain ATCC 6260 / CBS 566 / DSM 6381 / JCM 1539 / NBRC 10279 / NRRL Y-324) (Yeast)).